Reading from the N-terminus, the 251-residue chain is Regulator of G-protein signaling 9-binding protein C (251 aa).

At 1-230 the chain is on the cytoplasmic side; sequence MPLQNVKVAD…NSKGCCSDGQ (230 aa). 2 coiled-coil regions span residues 53–94 and 158–187; these read LRDE…ELER and ANKA…MKVN. A helical; Anchor for type IV membrane protein membrane pass occupies residues 231 to 250; the sequence is LIVSLLLCGTALVAITLYSI. A topological domain (extracellular) is located at residue Leu251.

The protein belongs to the RGS7BP/RGS9BP family.

The protein localises to the membrane. In terms of biological role, regulator of G protein-coupled receptor (GPCR) signaling. Probably acts by regulating the activity of some 'R7' family protein (RGS6, RGS7, RGS9 and/or RGS11). The polypeptide is Regulator of G-protein signaling 9-binding protein C (rgs9bp-c) (Xenopus laevis (African clawed frog)).